A 750-amino-acid polypeptide reads, in one-letter code: Photosystem I P700 chlorophyll a apoprotein A1 (750 aa).

Helical transmembrane passes span 70–93, 156–179, 195–219, 291–309, 346–369, 385–411, 433–455, and 531–549; these read VFSA…FHGA, LYCT…FHYH, LNHH…HVSL, IAHH…GHMY, WHAQ…HHMY, LSLF…IFMV, AIIS…LYIH, and FLVH…LILL. Positions 573 and 582 each coordinate [4Fe-4S] cluster. 2 helical membrane passes run 589-610 and 664-686; these read HVFL…HFSW and LSAY…MFLF. His675 contributes to the chlorophyll a' binding site. Chlorophyll a is bound by residues Met683 and Tyr691. A phylloquinone-binding site is contributed by Trp692. A helical transmembrane segment spans residues 724–744; the sequence is AVGVTHYLLGGIATTWAFFLA.

It belongs to the PsaA/PsaB family. The PsaA/B heterodimer binds the P700 chlorophyll special pair and subsequent electron acceptors. PSI consists of a core antenna complex that captures photons, and an electron transfer chain that converts photonic excitation into a charge separation. The eukaryotic PSI reaction center is composed of at least 11 subunits. Requires P700 is a chlorophyll a/chlorophyll a' dimer, A0 is one or more chlorophyll a, A1 is one or both phylloquinones and FX is a shared 4Fe-4S iron-sulfur center. as cofactor.

The protein resides in the plastid. The protein localises to the chloroplast thylakoid membrane. The catalysed reaction is reduced [plastocyanin] + hnu + oxidized [2Fe-2S]-[ferredoxin] = oxidized [plastocyanin] + reduced [2Fe-2S]-[ferredoxin]. PsaA and PsaB bind P700, the primary electron donor of photosystem I (PSI), as well as the electron acceptors A0, A1 and FX. PSI is a plastocyanin-ferredoxin oxidoreductase, converting photonic excitation into a charge separation, which transfers an electron from the donor P700 chlorophyll pair to the spectroscopically characterized acceptors A0, A1, FX, FA and FB in turn. Oxidized P700 is reduced on the lumenal side of the thylakoid membrane by plastocyanin. This chain is Photosystem I P700 chlorophyll a apoprotein A1, found in Olimarabidopsis pumila (Dwarf rocket).